The sequence spans 204 residues: Transmembrane protein 186 (204 aa).

The Mitochondrial matrix portion of the chain corresponds to methionine 1–lysine 69. A helical membrane pass occupies residues valine 70–glycine 90. At glutamine 91–aspartate 95 the chain is on the mitochondrial intermembrane side. A helical membrane pass occupies residues alanine 96–tyrosine 116. Topologically, residues alanine 117–asparagine 204 are mitochondrial matrix.

It belongs to the TMEM186 family. In terms of assembly, associates with mitochondrial complex I assembly intermediates during its biogenesis.

Its subcellular location is the mitochondrion inner membrane. Its function is as follows. As part of the MCIA complex, required for efficient assembly of the mitochondrial complex I. The polypeptide is Transmembrane protein 186 (Drosophila melanogaster (Fruit fly)).